An 84-amino-acid polypeptide reads, in one-letter code: MLVLARRTNESIMIGDDIEIVIVDIKGDQVKIGVKAPRNVSVHRAEVYKDIQEENRKAAETKIKPEDLGKIGDILKKKDSGKKG.

This sequence belongs to the CsrA/RsmA family. Homodimer; the beta-strands of each monomer intercalate to form a hydrophobic core, while the alpha-helices form wings that extend away from the core.

It localises to the cytoplasm. In terms of biological role, a translational regulator that binds mRNA to regulate translation initiation and/or mRNA stability. Usually binds in the 5'-UTR at or near the Shine-Dalgarno sequence preventing ribosome-binding, thus repressing translation. Its main target seems to be the major flagellin gene, while its function is anatagonized by FliW. The protein is Translational regulator CsrA of Leptospira borgpetersenii serovar Hardjo-bovis (strain JB197).